The sequence spans 206 residues: Large ribosomal subunit protein uL4 (206 aa).

The tract at residues T48 to Y97 is disordered. Residues K63 to R72 are compositionally biased toward basic residues.

The protein belongs to the universal ribosomal protein uL4 family. As to quaternary structure, part of the 50S ribosomal subunit.

In terms of biological role, one of the primary rRNA binding proteins, this protein initially binds near the 5'-end of the 23S rRNA. It is important during the early stages of 50S assembly. It makes multiple contacts with different domains of the 23S rRNA in the assembled 50S subunit and ribosome. Functionally, forms part of the polypeptide exit tunnel. The sequence is that of Large ribosomal subunit protein uL4 from Anaeromyxobacter dehalogenans (strain 2CP-1 / ATCC BAA-258).